Consider the following 103-residue polypeptide: MLLSSIVSFVADAAVVSTSIACLRHFTGFSLLRPANKIKNDKIRTGLLVYLNSGELIFNKGLEMVRNSSIKSLSSDSNRNIIDNSNNNQHPSSSSTSTSWKKF.

The first 13 residues, 1–13 (MLLSSIVSFVADA), serve as a signal peptide directing secretion. Asn67 carries an N-linked (GlcNAc...) asparagine glycan. The segment at 73–103 (LSSDSNRNIIDNSNNNQHPSSSSTSTSWKKF) is disordered.

The protein resides in the secreted. This is an uncharacterized protein from Dictyostelium discoideum (Social amoeba).